The sequence spans 151 residues: 3-hydroxyacyl-[acyl-carrier-protein] dehydratase FabZ (151 aa).

H57 is a catalytic residue.

The protein belongs to the thioester dehydratase family. FabZ subfamily.

It localises to the cytoplasm. The enzyme catalyses a (3R)-hydroxyacyl-[ACP] = a (2E)-enoyl-[ACP] + H2O. Involved in unsaturated fatty acids biosynthesis. Catalyzes the dehydration of short chain beta-hydroxyacyl-ACPs and long chain saturated and unsaturated beta-hydroxyacyl-ACPs. This chain is 3-hydroxyacyl-[acyl-carrier-protein] dehydratase FabZ, found in Synechococcus sp. (strain CC9605).